A 301-amino-acid chain; its full sequence is 4-hydroxy-tetrahydrodipicolinate synthase (301 aa).

A pyruvate-binding site is contributed by T46. The Proton donor/acceptor role is filled by Y134. The Schiff-base intermediate with substrate role is filled by K162. Residue I203 participates in pyruvate binding.

This sequence belongs to the DapA family. As to quaternary structure, homotetramer; dimer of dimers.

It localises to the cytoplasm. It carries out the reaction L-aspartate 4-semialdehyde + pyruvate = (2S,4S)-4-hydroxy-2,3,4,5-tetrahydrodipicolinate + H2O + H(+). It functions in the pathway amino-acid biosynthesis; L-lysine biosynthesis via DAP pathway; (S)-tetrahydrodipicolinate from L-aspartate: step 3/4. Functionally, catalyzes the condensation of (S)-aspartate-beta-semialdehyde [(S)-ASA] and pyruvate to 4-hydroxy-tetrahydrodipicolinate (HTPA). In Anaplasma marginale (strain Florida), this protein is 4-hydroxy-tetrahydrodipicolinate synthase.